A 248-amino-acid chain; its full sequence is UPF0736 protein ABC2536 (248 aa).

Belongs to the UPF0736 family.

The chain is UPF0736 protein ABC2536 from Shouchella clausii (strain KSM-K16) (Alkalihalobacillus clausii).